We begin with the raw amino-acid sequence, 848 residues long: Neuroligin-3 (848 aa).

The N-terminal stretch at 1–37 is a signal peptide; the sequence is MWLQLGLPSLSLSPTPTVGRSLCLILWFLSLVLRAST. At 38-709 the chain is on the extracellular side; the sequence is QAPAPTVNTH…NPRDYSTELS (672 aa). N-linked (GlcNAc...) asparagine glycosylation occurs at asparagine 98. A disulfide bridge connects residues cysteine 106 and cysteine 141. The interval 169–195 is disordered; sequence CRKGGSGAKKQGEDLADNDGDEDEDIR. Over residues 182-194 the composition is skewed to acidic residues; the sequence is DLADNDGDEDEDI. 2 disulfide bridges follow: cysteine 340-cysteine 351 and cysteine 510-cysteine 544. Residue asparagine 545 is glycosylated (N-linked (GlcNAc...) asparagine). Polar residues-rich tracts occupy residues 645–656 and 677–689; these read TKVPPPDTTHSS and AYSNENAPGSWNG. The interval 645–691 is disordered; the sequence is TKVPPPDTTHSSHITRRPNGKTWSTKRPAISPAYSNENAPGSWNGDQ. A helical membrane pass occupies residues 710–730; the sequence is VTIAVGASLLFLNVLAFAALY. Residues 731–848 lie on the Cytoplasmic side of the membrane; that stretch reads YRKDKRRQEP…LPNSHSTTRV (118 aa). Phosphoserine is present on serine 745. At tyrosine 792 the chain carries Phosphotyrosine.

It belongs to the type-B carboxylesterase/lipase family. Homodimer, and heterodimer with NLGN1 and NLGN2. Interacts with neurexins NRXN1, NRXN2 and NRXN3. Interaction with neurexins is mediated by heparan sulfate glycan modification on neurexin. Interacts (via its C-terminus) with DLG4/PSD-95 (via PDZ domain 3). In terms of processing, the N-terminus is blocked. As to expression, detected in brain and on hippocampus neurons, especially at excitatory synapses. Detected in retina (at protein level). Expressed in brain, spinal cord and dorsal root ganglion.

Its subcellular location is the cell membrane. It is found in the synapse. Cell surface protein involved in cell-cell-interactions via its interactions with neurexin family members. Plays a role in synapse function and synaptic signal transmission, and probably mediates its effects by recruiting and clustering other synaptic proteins. May promote the initial formation of synapses, but is not essential for this. May also play a role in glia-glia or glia-neuron interactions in the developing peripheral nervous system. The sequence is that of Neuroligin-3 (Nlgn3) from Rattus norvegicus (Rat).